Reading from the N-terminus, the 72-residue chain is Translation initiation factor IF-1 (72 aa).

Residues 1-72 (MAKEGNIEME…SKGRIVYRAR (72 aa)) form the S1-like domain.

It belongs to the IF-1 family. As to quaternary structure, component of the 30S ribosomal translation pre-initiation complex which assembles on the 30S ribosome in the order IF-2 and IF-3, IF-1 and N-formylmethionyl-tRNA(fMet); mRNA recruitment can occur at any time during PIC assembly.

The protein resides in the cytoplasm. Its function is as follows. One of the essential components for the initiation of protein synthesis. Stabilizes the binding of IF-2 and IF-3 on the 30S subunit to which N-formylmethionyl-tRNA(fMet) subsequently binds. Helps modulate mRNA selection, yielding the 30S pre-initiation complex (PIC). Upon addition of the 50S ribosomal subunit IF-1, IF-2 and IF-3 are released leaving the mature 70S translation initiation complex. This is Translation initiation factor IF-1 from Hahella chejuensis (strain KCTC 2396).